Consider the following 87-residue polypeptide: Large ribosomal subunit protein bL31B (87 aa).

It belongs to the bacterial ribosomal protein bL31 family. Type B subfamily. Part of the 50S ribosomal subunit.

This chain is Large ribosomal subunit protein bL31B, found in Pseudomonas aeruginosa (strain LESB58).